A 180-amino-acid chain; its full sequence is ATP-dependent protease subunit HslV (180 aa).

Residue Thr-5 is part of the active site. Gly-165, Cys-168, and Thr-171 together coordinate Na(+).

The protein belongs to the peptidase T1B family. HslV subfamily. As to quaternary structure, a double ring-shaped homohexamer of HslV is capped on each side by a ring-shaped HslU homohexamer. The assembly of the HslU/HslV complex is dependent on binding of ATP.

It is found in the cytoplasm. The enzyme catalyses ATP-dependent cleavage of peptide bonds with broad specificity.. Its activity is regulated as follows. Allosterically activated by HslU binding. Functionally, protease subunit of a proteasome-like degradation complex believed to be a general protein degrading machinery. This chain is ATP-dependent protease subunit HslV, found in Helicobacter pylori (strain P12).